We begin with the raw amino-acid sequence, 290 residues long: Short neuropeptide F (290 aa).

The first 32 residues, 1 to 32, serve as a signal peptide directing secretion; the sequence is MFRFNPQLSHGCALALICCLLNLLMMHQPTNA. Positions 33–87 are excised as a propeptide; sequence ELSPVVQGEFFLPILPDDHPPNTDTSFGGPISNLYDNLLQREYAGPVVFPNHQVE. Phenylalanine amide is present on residues Phe100 and Phe134. Positions 138–290 are excised as a propeptide; the sequence is DPTLPQMRRT…IETSSIAPKN (153 aa). Residues 238 to 290 form a disordered region; the sequence is VAGYANDGDDTEAQLDEDTSEFQREARKPMRLRWGRSTGKAPQIETSSIAPKN. Acidic residues predominate over residues 244–257; that stretch reads DGDDTEAQLDEDTS. The span at 281–290 shows a compositional bias: polar residues; it reads IETSSIAPKN.

The protein belongs to the NPY family.

The protein localises to the secreted. Its function is as follows. Plays a role in controlling food intake and regulating body size. In Drosophila pseudoobscura pseudoobscura (Fruit fly), this protein is Short neuropeptide F.